The sequence spans 322 residues: MNRTLQPDSGASQTAPTAHQARAFAPASVANVAVGFDLLGYPMDQVGDTVTVRRIDTPQVRIAAIRGIAQPLPLQTERNTAGAALLSMHRDLALPFGFELEIDKGIPLSSGMGGSAASCVAALLAANALLDEPLRREHLYRYALDGEAVASGSRHGDNLGPLFLGGLVLCTLERLVPVTVPTAWHSLLVHPDTLLETRRAREVLKEPYLLPDIVTQSANLALVLAGCYHSDAELVRAGLRDVLIEPRRAPLIAGFTAAQQAALQADAMGASISGAGPSVFAWFQTRSAAEAAAPAVRAAFTAAGFDSQAWVTPLTSPGARLL.

P107 to A117 lines the ATP pocket.

Belongs to the GHMP kinase family. Homoserine kinase subfamily.

The protein resides in the cytoplasm. The catalysed reaction is L-homoserine + ATP = O-phospho-L-homoserine + ADP + H(+). It functions in the pathway amino-acid biosynthesis; L-threonine biosynthesis; L-threonine from L-aspartate: step 4/5. In terms of biological role, catalyzes the ATP-dependent phosphorylation of L-homoserine to L-homoserine phosphate. The chain is Homoserine kinase from Xylella fastidiosa (strain M23).